The following is a 121-amino-acid chain: B-box domain protein 31 (121 aa).

The B box-type; atypical zinc-finger motif lies at 26 to 72; sequence SVPVRCELCDGDASVFCEADSAFLCRKCDRWVHGANFLAWRHVRRVL. Positions 117-121 match the PFVFL motif; it reads PFVFL.

As to expression, highly expressed in shoot apical meristems and in vascular tissues of leaves. Also detected in petioles.

Developmental regulator acting by forming heterodimeric complexes, that sequester CO and CO-like (COL) proteins into non-functional complexes. Involved in the CO-mediated long-day flowering-promotion pathway. Engages CO and the transcriptional repressor TPL in a tripartite complex. This chain is B-box domain protein 31, found in Arabidopsis thaliana (Mouse-ear cress).